We begin with the raw amino-acid sequence, 240 residues long: Ribosomal RNA large subunit methyltransferase E (240 aa).

Gly residues predominate over residues 1 to 20 (MSKAGGNKGGVKTGGRGGAG). Residues 1-27 (MSKAGGNKGGVKTGGRGGAGSSNLQVR) are disordered. Residues glycine 92, tryptophan 94, aspartate 115, aspartate 131, and aspartate 155 each coordinate S-adenosyl-L-methionine. Lysine 195 serves as the catalytic Proton acceptor.

Belongs to the class I-like SAM-binding methyltransferase superfamily. RNA methyltransferase RlmE family.

The protein resides in the cytoplasm. It carries out the reaction uridine(2552) in 23S rRNA + S-adenosyl-L-methionine = 2'-O-methyluridine(2552) in 23S rRNA + S-adenosyl-L-homocysteine + H(+). Its function is as follows. Specifically methylates the uridine in position 2552 of 23S rRNA at the 2'-O position of the ribose in the fully assembled 50S ribosomal subunit. The polypeptide is Ribosomal RNA large subunit methyltransferase E (Brucella anthropi (strain ATCC 49188 / DSM 6882 / CCUG 24695 / JCM 21032 / LMG 3331 / NBRC 15819 / NCTC 12168 / Alc 37) (Ochrobactrum anthropi)).